Consider the following 383-residue polypeptide: Putative glutamate--cysteine ligase 2-2 (383 aa).

Belongs to the glutamate--cysteine ligase type 2 family. YbdK subfamily.

The enzyme catalyses L-cysteine + L-glutamate + ATP = gamma-L-glutamyl-L-cysteine + ADP + phosphate + H(+). Functionally, ATP-dependent carboxylate-amine ligase which exhibits weak glutamate--cysteine ligase activity. This chain is Putative glutamate--cysteine ligase 2-2, found in Legionella pneumophila (strain Lens).